Reading from the N-terminus, the 319-residue chain is D-alanine--D-alanine ligase (319 aa).

Residues 120–315 (KRVLAQAGVP…YPELLRRLVE (196 aa)) form the ATP-grasp domain. ATP is bound at residue 147-198 (DPPFFVKPANTGSSVGISRVERFQDLEAALALAFRYDEKAVVEKALSPVREL). Mg(2+) is bound by residues Asp-270, Glu-282, and Asn-284.

Belongs to the D-alanine--D-alanine ligase family. Mg(2+) serves as cofactor. Requires Mn(2+) as cofactor.

The protein resides in the cytoplasm. It carries out the reaction 2 D-alanine + ATP = D-alanyl-D-alanine + ADP + phosphate + H(+). It participates in cell wall biogenesis; peptidoglycan biosynthesis. In terms of biological role, cell wall formation. The polypeptide is D-alanine--D-alanine ligase (Thermus thermophilus (strain ATCC BAA-163 / DSM 7039 / HB27)).